Here is a 185-residue protein sequence, read N- to C-terminus: Large ribosomal subunit protein uL15 (185 aa).

The tract at residues 1 to 51 (MDLSSLRPAAGAVKNKKRVGRGQGSGNGTTAGKGNKGQQARSGYQKPINEG) is disordered. Residues 21–35 (RGQGSGNGTTAGKGN) show a composition bias toward gly residues.

The protein belongs to the universal ribosomal protein uL15 family. In terms of assembly, part of the 50S ribosomal subunit.

Its function is as follows. Binds to the 23S rRNA. This Chlorobium phaeobacteroides (strain DSM 266 / SMG 266 / 2430) protein is Large ribosomal subunit protein uL15.